A 256-amino-acid chain; its full sequence is Thiazole synthase (256 aa).

Catalysis depends on Lys96, which acts as the Schiff-base intermediate with DXP. Residues Gly157, 183–184, and 205–206 contribute to the 1-deoxy-D-xylulose 5-phosphate site; these read AG and NT.

It belongs to the ThiG family. In terms of assembly, homotetramer. Forms heterodimers with either ThiH or ThiS.

It is found in the cytoplasm. It catalyses the reaction [ThiS sulfur-carrier protein]-C-terminal-Gly-aminoethanethioate + 2-iminoacetate + 1-deoxy-D-xylulose 5-phosphate = [ThiS sulfur-carrier protein]-C-terminal Gly-Gly + 2-[(2R,5Z)-2-carboxy-4-methylthiazol-5(2H)-ylidene]ethyl phosphate + 2 H2O + H(+). It functions in the pathway cofactor biosynthesis; thiamine diphosphate biosynthesis. Functionally, catalyzes the rearrangement of 1-deoxy-D-xylulose 5-phosphate (DXP) to produce the thiazole phosphate moiety of thiamine. Sulfur is provided by the thiocarboxylate moiety of the carrier protein ThiS. In vitro, sulfur can be provided by H(2)S. This Bacillus cereus (strain ATCC 10987 / NRS 248) protein is Thiazole synthase.